A 205-amino-acid polypeptide reads, in one-letter code: Methylamine utilization protein MauD (205 aa).

Residues I5–L25 traverse the membrane as a helical segment. The Thioredoxin domain occupies P50–V184.

The protein resides in the membrane. The protein operates within one-carbon metabolism; methylamine degradation. Functionally, may be specifically involved in the processing, transport, and/or maturation of the MADH beta-subunit. This is Methylamine utilization protein MauD (mauD) from Methylobacillus flagellatus (strain ATCC 51484 / DSM 6875 / VKM B-1610 / KT).